Here is a 291-residue protein sequence, read N- to C-terminus: Probable L-ascorbate peroxidase 4, peroxisomal (291 aa).

Catalysis depends on histidine 40, which acts as the Proton acceptor. Histidine 160 serves as a coordination point for heme b. K(+)-binding residues include threonine 161, threonine 177, and aspartate 184. The chain crosses the membrane as a helical span at residues 263-283 (VLAQSAVGVAVAAAVVIVSYL).

This sequence belongs to the peroxidase family. Ascorbate peroxidase subfamily. Requires heme b as cofactor. Expressed in leaves, stems and flowers.

The protein resides in the peroxisome membrane. It carries out the reaction L-ascorbate + H2O2 = L-dehydroascorbate + 2 H2O. In terms of biological role, plays a key role in hydrogen peroxide removal. The polypeptide is Probable L-ascorbate peroxidase 4, peroxisomal (Oryza sativa subsp. japonica (Rice)).